We begin with the raw amino-acid sequence, 1108 residues long: Eukaryotic translation initiation factor 2-alpha kinase 3 (1108 aa).

Residues 1-27 form the signal peptide; that stretch reads MERATQPRPRALLLLFLLLGCAAGISA. Residues 28–506 lie on the Lumenal side of the membrane; the sequence is VARARSLLAP…HYSKNIRKKD (479 aa). A disordered region spans residues 71 to 92; sequence EALPAASGEQESRATESDDDVE. N-linked (GlcNAc...) asparagine glycosylation occurs at Asn253. A helical transmembrane segment spans residues 507-527; sequence PILLLHWWKEIFGTILLCIVA. The Cytoplasmic portion of the chain corresponds to 528 to 1108; sequence TTFIVRRLFH…SSTFSPLPGN (581 aa). The segment at 542-563 is disordered; it reads RQRKESETQCQTESKYDSVSAD. The 485-residue stretch at 585–1069 folds into the Protein kinase domain; that stretch reads FEPIQCMGRG…ATDIIENAVF (485 aa). 591-599 serves as a coordination point for ATP; that stretch reads MGRGGFGVV. At Tyr611 the chain carries Phosphotyrosine; by autocatalysis. ATP is bound at residue Lys614. Residues 639–880 form an insert loop region; it reads EHPGIVRYFN…SPKVYLYIQM (242 aa). Phosphoserine is present on Ser707. Disordered stretches follow at residues 772–818 and 832–856; these read DEGH…RMNR and FKHS…TTLS. Positions 785–798 are enriched in polar residues; the sequence is SPYTRSREGTSSSI. Phosphothreonine is present on Thr794. Residues 837–856 show a composition bias toward low complexity; the sequence is SRSSSEATLSTSPTRPTTLS. Asp929 serves as the catalytic Proton acceptor. Thr974 is modified (phosphothreonine). Residues 1080 to 1108 form a disordered region; it reads LRQRSRSLSSSGTKHSRQPSSTFSPLPGN. Ser1086 carries the post-translational modification Phosphoserine. Residues 1097-1108 show a composition bias toward polar residues; the sequence is QPSSTFSPLPGN.

The protein belongs to the protein kinase superfamily. Ser/Thr protein kinase family. GCN2 subfamily. Forms dimers with HSPA5/BIP in resting cells. Homotetramerizes in response to endoplasmic reticulum (ER) stress, leading to its activation. Interacts with HSP90B1/GRP94. Interacts with DNAJC3; inhibiting EIF2AK3/PERK activity. Interacts with ATAD3A; ATAD3A and EIF2S1/eIF-2-alpha occupy a common binding site within the cytoplasmic loop of EIF2AK3/PERK, leading to prevent EIF2AK3/PERK association with its substrate EIF2S1/eIF-2-alpha. Interacts with MFN2. Interacts with TMEM33. Interacts with PDIA6. Interacts with LACC1. Oligomerization of the N-terminal ER luminal domain by ER stress promotes EIF2AK3/PERK trans-autophosphorylation of the C-terminal cytoplasmic kinase domain at multiple residues including Thr-974 on the kinase activation loop. Autophosphorylated at Tyr-611 following endoplasmic reticulum stress, leading to activate its activity. Dephosphorylated at Tyr-611 by PTPN1/PTP1B, leading to inactivate its enzyme activity. Phosphorylation at Thr-794 by AKT (AKT1, AKT2 and/or AKT3) inactivates EIF2AK3/PERK. In terms of processing, ADP-ribosylated by PARP16 upon ER stress, which increases kinase activity. In terms of tissue distribution, ubiquitous.

It localises to the endoplasmic reticulum membrane. The catalysed reaction is L-seryl-[protein] + ATP = O-phospho-L-seryl-[protein] + ADP + H(+). It catalyses the reaction L-threonyl-[protein] + ATP = O-phospho-L-threonyl-[protein] + ADP + H(+). It carries out the reaction L-tyrosyl-[protein] + ATP = O-phospho-L-tyrosyl-[protein] + ADP + H(+). Inhibited by HSPA5/BIP in absence of stress. Perturbation in protein folding in the endoplasmic reticulum (ER) promotes reversible dissociation from HSPA5/BIP and oligomerization, resulting in trans-autophosphorylation and kinase activity induction. Inactivated following phosphorylation at Thr-794 by AKT (AKT1, AKT2 and/or AKT3). Inhibited by ATAD3A at mitochondria-endoplasmic reticulum contact sites, providing a safe haven for mitochondrial protein translation during ER stress. Metabolic-stress sensing protein kinase that phosphorylates the alpha subunit of eukaryotic translation initiation factor 2 (EIF2S1/eIF-2-alpha) in response to various stress, such as unfolded protein response (UPR). Key effector of the integrated stress response (ISR) to unfolded proteins: EIF2AK3/PERK specifically recognizes and binds misfolded proteins, leading to its activation and EIF2S1/eIF-2-alpha phosphorylation. EIF2S1/eIF-2-alpha phosphorylation in response to stress converts EIF2S1/eIF-2-alpha in a global protein synthesis inhibitor, leading to a global attenuation of cap-dependent translation, while concomitantly initiating the preferential translation of ISR-specific mRNAs, such as the transcriptional activators ATF4 and QRICH1, and hence allowing ATF4- and QRICH1-mediated reprogramming. The EIF2AK3/PERK-mediated unfolded protein response increases mitochondrial oxidative phosphorylation by promoting ATF4-mediated expression of COX7A2L/SCAF1, thereby increasing formation of respiratory chain supercomplexes. In contrast to most subcellular compartments, mitochondria are protected from the EIF2AK3/PERK-mediated unfolded protein response due to EIF2AK3/PERK inhibition by ATAD3A at mitochondria-endoplasmic reticulum contact sites. In addition to EIF2S1/eIF-2-alpha, also phosphorylates NFE2L2/NRF2 in response to stress, promoting release of NFE2L2/NRF2 from the BCR(KEAP1) complex, leading to nuclear accumulation and activation of NFE2L2/NRF2. Serves as a critical effector of unfolded protein response (UPR)-induced G1 growth arrest due to the loss of cyclin-D1 (CCND1). Involved in control of mitochondrial morphology and function. This Rattus norvegicus (Rat) protein is Eukaryotic translation initiation factor 2-alpha kinase 3 (Eif2ak3).